We begin with the raw amino-acid sequence, 881 residues long: DNA mismatch repair protein MutS (881 aa).

Gly-626–Ser-633 lines the ATP pocket.

It belongs to the DNA mismatch repair MutS family.

Functionally, this protein is involved in the repair of mismatches in DNA. It is possible that it carries out the mismatch recognition step. This protein has a weak ATPase activity. This Desulfosudis oleivorans (strain DSM 6200 / JCM 39069 / Hxd3) (Desulfococcus oleovorans) protein is DNA mismatch repair protein MutS.